The primary structure comprises 284 residues: Bifunctional protein FolD (284 aa).

Residue 166-168 (GAS) coordinates NADP(+).

The protein belongs to the tetrahydrofolate dehydrogenase/cyclohydrolase family. In terms of assembly, homodimer.

It catalyses the reaction (6R)-5,10-methylene-5,6,7,8-tetrahydrofolate + NADP(+) = (6R)-5,10-methenyltetrahydrofolate + NADPH. It carries out the reaction (6R)-5,10-methenyltetrahydrofolate + H2O = (6R)-10-formyltetrahydrofolate + H(+). It participates in one-carbon metabolism; tetrahydrofolate interconversion. Catalyzes the oxidation of 5,10-methylenetetrahydrofolate to 5,10-methenyltetrahydrofolate and then the hydrolysis of 5,10-methenyltetrahydrofolate to 10-formyltetrahydrofolate. In Legionella pneumophila subsp. pneumophila (strain Philadelphia 1 / ATCC 33152 / DSM 7513), this protein is Bifunctional protein FolD.